The sequence spans 532 residues: T-complex protein 1 subunit epsilon (532 aa).

It belongs to the TCP-1 chaperonin family. Component of the T-complex protein 1 (TCP1) complex.

It localises to the cytoplasm. Its function is as follows. Molecular chaperone; assists the folding of proteins upon ATP hydrolysis. The chain is T-complex protein 1 subunit epsilon (CCT5) from Encephalitozoon cuniculi (strain GB-M1) (Microsporidian parasite).